Reading from the N-terminus, the 575-residue chain is CCR4-NOT transcription complex subunit 4 (575 aa).

Residues 14 to 57 (CPLCMEPLEIDDINFFPCTCGYQICRFCWHRIRTDENGLCPACR) form an RING-type; degenerate zinc finger. Residues 68–104 (KPLSQEELQRIKNEKKQKQNERKQKISENRKHLASVR) adopt a coiled-coil conformation. A Phosphoserine modification is found at serine 71. The RRM domain occupies 109–189 (NLVFVVGLSQ…VVDGRTLKAS (81 aa)). Residues 190-217 (LGTTKYCSYFLKNMQCPKPDCMYLHELG) form a C3H1-type zinc finger. Disordered regions lie at residues 256–372 (TGSV…EPQS) and 424–458 (SVQDQPSLSPTSLQNSSSHTTTAKGPGSGFLHPAA). A compositionally biased stretch (polar residues) spans 281–299 (DSLSIGNGDNSQQISNSDT). A Phosphoserine modification is found at serine 301. Positions 307-322 (SKSNPVIPISSSNHSA) are enriched in polar residues. Serine 324 carries the post-translational modification Phosphoserine. Positions 345 to 356 (NPIPSGLPPFPS) are enriched in pro residues. Residues 428–441 (QPSLSPTSLQNSSS) show a composition bias toward low complexity. Position 432 is a phosphoserine (serine 432). Residues arginine 475 and arginine 483 each carry the asymmetric dimethylarginine modification. The residue at position 490 (serine 490) is a Phosphoserine. Arginine 497 is modified (asymmetric dimethylarginine). Positions 553 to 575 (PLSTSSHSLQQGQQPTSLHTTVA) are disordered.

As to quaternary structure, interacts with CNOT1 via its C-terminus but does not stably associate with the CCR4-NOT complex. Interacts (via RING domain) with UBE2D2. Interacts with ABCE1, PINK1 and PELO. Autoubiquitinated.

Its subcellular location is the cytoplasm. The protein resides in the nucleus. The enzyme catalyses S-ubiquitinyl-[E2 ubiquitin-conjugating enzyme]-L-cysteine + [acceptor protein]-L-lysine = [E2 ubiquitin-conjugating enzyme]-L-cysteine + N(6)-ubiquitinyl-[acceptor protein]-L-lysine.. It participates in protein modification; protein ubiquitination. Functionally, has E3 ubiquitin ligase activity, promoting ubiquitination and degradation of target proteins. Involved in activation of the JAK/STAT pathway. Catalyzes ubiquitination of methylated RBM15. Plays a role in quality control of translation of mitochondrial outer membrane-localized mRNA. As part of the PINK1-regulated signaling, upon mitochondria damage, ubiquitinates ABCE1 and thereby recruits autophagy receptors to the mitochondrial outer membrane to initiate mitophagy. This Homo sapiens (Human) protein is CCR4-NOT transcription complex subunit 4 (CNOT4).